Consider the following 83-residue polypeptide: Gas vesicle protein G (83 aa).

It belongs to the gas vesicle GvpG family. In terms of assembly, gvpF to GvpM interact with each other in vitro, and may form multi-subunit complex(es).

It is found in the gas vesicle. In terms of biological role, proteins GvpF to GvpM might be involved in nucleating gas vesicle formation. A minor component of the gas vesicle. Gas vesicles are hollow, gas filled proteinaceous nanostructures found in some microorganisms. They allow positioning of halobacteria at the optimal depth for growth in the poorly aerated, shallow brine pools of their habitat. Expression of a 9.5 kb mc-vac DNA fragment containing 2 divergently transcribed regions (gvpD-gvpE-gvpF-gvpG-gvpH-gvpI-gvpJ-gvpK-gvpL-gvpM and gvpA-gvpC-gvpN-gvpO) allows H.volcanii to produce gas vesicles. In Haloferax mediterranei (strain ATCC 33500 / DSM 1411 / JCM 8866 / NBRC 14739 / NCIMB 2177 / R-4) (Halobacterium mediterranei), this protein is Gas vesicle protein G.